Reading from the N-terminus, the 169-residue chain is Disulfide bond formation protein B 1 (169 aa).

The Cytoplasmic portion of the chain corresponds to 1–14; the sequence is MSDDRLGLGRERRF. The chain crosses the membrane as a helical span at residues 15-31; the sequence is LVLLGIICLALIGGALY. Residues 32 to 49 lie on the Periplasmic side of the membrane; the sequence is MQVVLGEAPCPLCILQRY. Residues C41 and C44 are joined by a disulfide bond. Residues 50-64 form a helical membrane-spanning segment; it reads ALLLIALFAFIGAAM. The Cytoplasmic portion of the chain corresponds to 65–71; that stretch reads SSRRGVT. Residues 72–89 form a helical membrane-spanning segment; sequence VMETLVVICALAGAGVAG. The Periplasmic segment spans residues 90–144; sequence HHVYTQFYPSVSCGIDVLQPIVDSLPLAKIFPLGFQVDGFCSTPYPPILGLSLAQ. C102 and C130 are disulfide-bonded. A helical transmembrane segment spans residues 145–163; sequence WALVAFVLTVILVPLGVVR. Residues 164-169 lie on the Cytoplasmic side of the membrane; the sequence is NRKKTY.

The protein belongs to the DsbB family.

The protein localises to the cell inner membrane. Required for disulfide bond formation in some periplasmic proteins. Acts by oxidizing the DsbA protein. In Pseudomonas fluorescens (strain ATCC BAA-477 / NRRL B-23932 / Pf-5), this protein is Disulfide bond formation protein B 1.